We begin with the raw amino-acid sequence, 828 residues long: USP6 N-terminal-like protein (828 aa).

Residue Met1 is modified to N-acetylmethionine. The region spanning 100–292 (GIPLQLRGEV…RIWDIYIFEG (193 aa)) is the Rab-GAP TBC domain. Residues 355-367 (DLPEPGKEDEYPK) are compositionally biased toward basic and acidic residues. Positions 355-722 (DLPEPGKEDE…NSGSPKNGKL (368 aa)) are disordered. Phosphoserine occurs at positions 391, 396, and 400. Residues 434 to 451 (KSVEEESKKLKDEADFQR) show a composition bias toward basic and acidic residues. A compositionally biased stretch (low complexity) spans 465 to 478 (NHAAANQNSNATSN). Composition is skewed to basic and acidic residues over residues 498–508 (RTAKYTMEGKG) and 535–544 (KALDAEDGKR). 2 positions are modified to phosphoserine: Ser546 and Ser549. At Tyr582 the chain carries Phosphotyrosine. A Phosphoserine modification is found at Ser585. Polar residues predominate over residues 592–603 (PSSSPSKVSNKF). Phosphoserine occurs at positions 642, 655, 659, 676, and 680. Polar residues-rich tracts occupy residues 648-666 (TANSSFASPQFSPGTQLNP) and 673-683 (STLSVSASPEK). The segment covering 686 to 697 (SRPSPLVLPSSR) has biased composition (low complexity). Ser716 bears the Phosphoserine mark. A Phosphotyrosine modification is found at Tyr729. The disordered stretch occupies residues 789–817 (KASPAAEDASPSGYPYSGPPPPAYHYRNR).

In terms of assembly, interacts with EPS8. In terms of tissue distribution, widely expressed.

The protein localises to the golgi apparatus. It is found in the cytoplasmic vesicle. Its function is as follows. Acts as a GTPase-activating protein for RAB5A and RAB43. Involved in receptor trafficking. In complex with EPS8 inhibits internalization of EGFR. Involved in retrograde transport from the endocytic pathway to the Golgi apparatus. Involved in the transport of Shiga toxin from early and recycling endosomes to the trans-Golgi network. Required for structural integrity of the Golgi complex. This is USP6 N-terminal-like protein (USP6NL) from Homo sapiens (Human).